We begin with the raw amino-acid sequence, 32 residues long: Alpha-2-macroglobulin homolog (32 aa).

A cross-link (isoglutamyl cysteine thioester (Cys-Gln)) is located at residues 16–19; sequence CGEQ.

Belongs to the protease inhibitor I39 (alpha-2-macroglobulin) family. In terms of assembly, homodimer; disulfide-linked.

The protein localises to the secreted. In terms of biological role, is able to inhibit all four classes of proteinases by a unique 'trapping' mechanism. This protein has a peptide stretch, called the 'bait region' which contains specific cleavage sites for different proteinases. When a proteinase cleaves the bait region, a conformational change is induced in the protein which traps the proteinase. The entrapped enzyme remains active against low molecular weight substrates (activity against high molecular weight substrates is greatly reduced). Following cleavage in the bait region a thioester bond is hydrolyzed and mediates the covalent binding of the protein to the proteinase. This is Alpha-2-macroglobulin homolog from Pacifastacus leniusculus (Signal crayfish).